We begin with the raw amino-acid sequence, 228 residues long: MLKWIVRGVAALLALFLLYQLWIFGHIVYWKWNNPATTAFMDEQQARLAETNPDAELRYRWVDYGRISPQLKRAIVASEDAKFLQHEGFDWEGIQTAWEKNLQKGRIVAGGSTISQQLAKNLFLSSRRTPWRKAEEALITVMLEAVMDKRRIFEIYLNVIEWGDGVFGAESAARHYYRVPASRLSAGQAAKLAAMVPNPRYYDTHRNDRTLLRKTKIIQRRMNFVAIP.

Residues 8-28 (GVAALLALFLLYQLWIFGHIV) form a helical membrane-spanning segment.

The protein belongs to the glycosyltransferase 51 family.

The protein resides in the cell inner membrane. It carries out the reaction [GlcNAc-(1-&gt;4)-Mur2Ac(oyl-L-Ala-gamma-D-Glu-L-Lys-D-Ala-D-Ala)](n)-di-trans,octa-cis-undecaprenyl diphosphate + beta-D-GlcNAc-(1-&gt;4)-Mur2Ac(oyl-L-Ala-gamma-D-Glu-L-Lys-D-Ala-D-Ala)-di-trans,octa-cis-undecaprenyl diphosphate = [GlcNAc-(1-&gt;4)-Mur2Ac(oyl-L-Ala-gamma-D-Glu-L-Lys-D-Ala-D-Ala)](n+1)-di-trans,octa-cis-undecaprenyl diphosphate + di-trans,octa-cis-undecaprenyl diphosphate + H(+). It functions in the pathway cell wall biogenesis; peptidoglycan biosynthesis. Functionally, peptidoglycan polymerase that catalyzes glycan chain elongation from lipid-linked precursors. This chain is Biosynthetic peptidoglycan transglycosylase, found in Laribacter hongkongensis (strain HLHK9).